The following is a 1013-amino-acid chain: GTPase-activating protein BEM3 (1013 aa).

4 disordered regions span residues 90-197 (TVVE…GSPA), 258-277 (GSRYDTERAGGPGPLSPESI), 282-301 (SDLQEHQPSDLSSTTRTDLG), and 307-421 (VDTT…HQSK). Over residues 143–160 (QEATSGAQQVPLLTSSKS) the composition is skewed to polar residues. Composition is skewed to polar residues over residues 309–319 (TTFNAEDNPTG), 333–388 (TLQN…TSSN), and 404–418 (KSYSQHSGSPHSNSH). The region spanning 555–662 (EFAKEGMLLV…WISVLTTLCD (108 aa)) is the PH domain. The disordered stretch occupies residues 702 to 726 (AMDATSPTRPNDPNPVSLTSEEEKE). Polar residues predominate over residues 706 to 720 (TSPTRPNDPNPVSLT). In terms of domain architecture, Rho-GAP spans 799–1013 (LQLSSHPYQG…PPVNIHIPQI (215 aa)).

The protein resides in the cytoplasm. Functionally, GTPase-activating protein (GAP) for CDC42 and less efficiently for RHO1. Negative regulator of the pheromone-response pathway through the STE20 protein kinase. This is GTPase-activating protein BEM3 (BEM3) from Eremothecium gossypii (strain ATCC 10895 / CBS 109.51 / FGSC 9923 / NRRL Y-1056) (Yeast).